A 62-amino-acid chain; its full sequence is Large ribosomal subunit protein uL29 (62 aa).

Belongs to the universal ribosomal protein uL29 family.

In Geotalea daltonii (strain DSM 22248 / JCM 15807 / FRC-32) (Geobacter daltonii), this protein is Large ribosomal subunit protein uL29.